Consider the following 869-residue polypeptide: Histone deacetylase 4 (869 aa).

Disordered stretches follow at residues 1 to 25 (MEEASSSTGSAGGAGPSVPNLPSTS), 128 to 167 (SSSNGNLSVPQTPTKEHHPTAPTSNRKCDLPRSNSTTISQ), and 180 to 218 (RSKGESNSQSNLMSNSVTANGNGHDNGRKLKNSNSQVNV). Residues 184-202 (ESNSQSNLMSNSVTANGNG) show a composition bias toward polar residues. Serine 251 bears the Phosphoserine mark. Positions 460–802 (CTTGLGYDQA…VQALIGESDD (343 aa)) are histone deacetylase. Histidine 608 is an active-site residue.

It belongs to the histone deacetylase family. HD type 2 subfamily. As to quaternary structure, interacts with mef-2. In terms of processing, phosphorylated by serine/threonine-protein kinase kin-29 at Ser-251; the phosphorylation inhibits repression of transcription by mef-2. May be phosphorylated by either cyclic-AMP dependent or cyclic-GMP dependent protein kinases. As to expression, expressed in body-wall muscle cells, hypodermal seam cells and neuronal cells including sensory amphid neuronal processes, the nerve ring, ventral nerve cords and motor neuronal commissures.

Its subcellular location is the nucleus. The enzyme catalyses N(6)-acetyl-L-lysyl-[histone] + H2O = L-lysyl-[histone] + acetate. Functionally, responsible for the deacetylation of lysine residues on the N-terminal part of the core histones (H2A, H2B, H3 and H4). Histone deacetylation gives a tag for epigenetic repression and plays an important role in transcriptional regulation, cell cycle progression and developmental events. Histone deacetylases act via the formation of large multiprotein complexes. Involved in transduction of sensory signals, together with egl-4, kin-29 and mef-2; binding to transcription factor mef-2 enables negative modulation of chemoreceptor gene expression in chemosensory neurons. May be involved in muscle development. This chain is Histone deacetylase 4 (hda-4), found in Caenorhabditis elegans.